A 243-amino-acid polypeptide reads, in one-letter code: UMP-CMP kinase 1 (243 aa).

G29 to T34 is a binding site for ATP. Positions S49–V78 are NMP. A ribonucleoside 5'-phosphate contacts are provided by residues R55, K76–V78, and G103–R106. Position 110 (N110) interacts with CMP. An LID region spans residues N141–D149. R142 provides a ligand contact to ATP. A ribonucleoside 5'-phosphate is bound by residues R146 and R157. R185 lines the ATP pocket.

It belongs to the adenylate kinase family. UMP-CMP kinase subfamily. In terms of assembly, monomer. It depends on Mg(2+) as a cofactor.

It localises to the cytoplasm. Its subcellular location is the nucleus. The enzyme catalyses UMP + ATP = UDP + ADP. It carries out the reaction CMP + ATP = CDP + ADP. It catalyses the reaction dCMP + ATP = dCDP + ADP. Functionally, catalyzes the phosphorylation of pyrimidine nucleoside monophosphates at the expense of ATP. Plays an important role in de novo pyrimidine nucleotide biosynthesis. Has preference for UMP and CMP as phosphate acceptors. The protein is UMP-CMP kinase 1 of Oryza sativa subsp. japonica (Rice).